Here is a 273-residue protein sequence, read N- to C-terminus: Hydroxyethylthiazole kinase 2 (273 aa).

Met-45 provides a ligand contact to substrate. ATP contacts are provided by Lys-120 and Thr-173. Gly-200 is a substrate binding site.

Belongs to the Thz kinase family. Mg(2+) serves as cofactor.

It carries out the reaction 5-(2-hydroxyethyl)-4-methylthiazole + ATP = 4-methyl-5-(2-phosphooxyethyl)-thiazole + ADP + H(+). It functions in the pathway cofactor biosynthesis; thiamine diphosphate biosynthesis; 4-methyl-5-(2-phosphoethyl)-thiazole from 5-(2-hydroxyethyl)-4-methylthiazole: step 1/1. Its function is as follows. Catalyzes the phosphorylation of the hydroxyl group of 4-methyl-5-beta-hydroxyethylthiazole (THZ). This is Hydroxyethylthiazole kinase 2 from Leuconostoc mesenteroides subsp. mesenteroides (strain ATCC 8293 / DSM 20343 / BCRC 11652 / CCM 1803 / JCM 6124 / NCDO 523 / NBRC 100496 / NCIMB 8023 / NCTC 12954 / NRRL B-1118 / 37Y).